Reading from the N-terminus, the 240-residue chain is Mannose-binding protein C (240 aa).

Residues 1–18 form the signal peptide; the sequence is MSLFPSLHLLLLIVMTAS. Collagen-like domains follow at residues 39–61 and 67–97; these read SPGI…KGEP and GLQG…GDSG. The residue at position 46 (proline 46) is a Hydroxyproline. Positions 48–102 are disordered; it reads KDGLDGAKGEKGEPGQGLIGLQGLPGMVGPQGSPGIPGLPGLKGQKGDSGIDPGN. A compositionally biased stretch (basic and acidic residues) spans 49–60; sequence DGLDGAKGEKGE. Residues proline 72, proline 81, and proline 87 each carry the hydroxyproline modification. Residues 104–122 are a coiled coil; it reads LANLRSELDNIKKWLIFAQ. The region spanning 126-237 is the C-type lectin domain; that stretch reads VGKKLYLTNG…CSSQLSAVCE (112 aa). 2 disulfide bridges follow: cysteine 147–cysteine 236 and cysteine 214–cysteine 228.

As to quaternary structure, interacts with MASP1 and MASP2. Interacts with MEP1A and MEP1B and may inhibit their catalytic activity. Forms oligomeric complexes of 2 or 3 homotrimers. As to expression, expressed in liver. Weakly expressed in kidney and testis.

The protein localises to the secreted. Its function is as follows. Calcium-dependent lectin involved in innate immune defense. Binds mannose, fucose and N-acetylglucosamine on different microorganisms and activates the lectin complement pathway. Binds to late apoptotic cells, as well as to apoptotic blebs and to necrotic cells, but not to early apoptotic cells, facilitating their uptake by macrophages. According to some authors, it only binds mannose. This is Mannose-binding protein C from Sus scrofa (Pig).